A 251-amino-acid chain; its full sequence is Electron transfer flavoprotein subunit beta, mitochondrial (251 aa).

It belongs to the ETF beta-subunit/FixA family. As to quaternary structure, heterodimer of an alpha and a beta subunit. FAD is required as a cofactor. AMP serves as cofactor.

The protein resides in the mitochondrion matrix. Functionally, the electron transfer flavoprotein serves as a specific electron acceptor for several dehydrogenases, including five acyl-CoA dehydrogenases, glutaryl-CoA and sarcosine dehydrogenase. It transfers the electrons to the main mitochondrial respiratory chain via ETF-ubiquinone oxidoreductase (ETF dehydrogenase). Involved in leucine catabolism and in phytol degradation. This is Electron transfer flavoprotein subunit beta, mitochondrial (ETFB) from Arabidopsis thaliana (Mouse-ear cress).